Consider the following 178-residue polypeptide: MPARPARCYRRIKGPPYTREEYIHGAPMIQIPKFDMGTTSAAARAAFTMVAKLVAEERGQIRMQALEAARQISSKYLTKYVGDANYYLRLNVVPHHVLRENRMLAMAGADRLQEGMRLAFGSPAGRAARVEPGQVIFYVEFKPEHLAHVKEALRRAASKLPIPTRIVVEPKGDGKTAS.

Belongs to the universal ribosomal protein uL16 family.

This chain is Large ribosomal subunit protein uL16, found in Pyrobaculum calidifontis (strain DSM 21063 / JCM 11548 / VA1).